A 563-amino-acid chain; its full sequence is Arginine--tRNA ligase (563 aa).

Residues 121–131 (PNIAKPFSIGH) carry the 'HIGH' region motif.

It belongs to the class-I aminoacyl-tRNA synthetase family. In terms of assembly, monomer.

The protein resides in the cytoplasm. It catalyses the reaction tRNA(Arg) + L-arginine + ATP = L-arginyl-tRNA(Arg) + AMP + diphosphate. The protein is Arginine--tRNA ligase of Streptococcus pneumoniae serotype 19F (strain G54).